Reading from the N-terminus, the 304-residue chain is Acetyl-coenzyme A carboxylase carboxyl transferase subunit beta (304 aa).

A CoA carboxyltransferase N-terminal domain is found at 23–292 (VWTKCDSCGQ…PNPEAPREGV (270 aa)). Positions 27, 30, 46, and 49 each coordinate Zn(2+). A C4-type zinc finger spans residues 27-49 (CDSCGQVLYRAELERNLEVCPKC). A disordered region spans residues 284 to 304 (NPEAPREGVVVPPVPDQEPEA). The segment covering 295 to 304 (PPVPDQEPEA) has biased composition (pro residues).

It belongs to the AccD/PCCB family. As to quaternary structure, acetyl-CoA carboxylase is a heterohexamer composed of biotin carboxyl carrier protein (AccB), biotin carboxylase (AccC) and two subunits each of ACCase subunit alpha (AccA) and ACCase subunit beta (AccD). It depends on Zn(2+) as a cofactor.

It is found in the cytoplasm. The catalysed reaction is N(6)-carboxybiotinyl-L-lysyl-[protein] + acetyl-CoA = N(6)-biotinyl-L-lysyl-[protein] + malonyl-CoA. It participates in lipid metabolism; malonyl-CoA biosynthesis; malonyl-CoA from acetyl-CoA: step 1/1. Functionally, component of the acetyl coenzyme A carboxylase (ACC) complex. Biotin carboxylase (BC) catalyzes the carboxylation of biotin on its carrier protein (BCCP) and then the CO(2) group is transferred by the transcarboxylase to acetyl-CoA to form malonyl-CoA. This is Acetyl-coenzyme A carboxylase carboxyl transferase subunit beta from Shigella flexneri serotype 5b (strain 8401).